Consider the following 161-residue polypeptide: Ribosome maturation factor RimP (161 aa).

It belongs to the RimP family.

The protein localises to the cytoplasm. Functionally, required for maturation of 30S ribosomal subunits. The polypeptide is Ribosome maturation factor RimP (Desulfosudis oleivorans (strain DSM 6200 / JCM 39069 / Hxd3) (Desulfococcus oleovorans)).